A 460-amino-acid chain; its full sequence is Argininosuccinate lyase (460 aa).

Belongs to the lyase 1 family. Argininosuccinate lyase subfamily.

It localises to the cytoplasm. It catalyses the reaction 2-(N(omega)-L-arginino)succinate = fumarate + L-arginine. Its pathway is amino-acid biosynthesis; L-arginine biosynthesis; L-arginine from L-ornithine and carbamoyl phosphate: step 3/3. This chain is Argininosuccinate lyase, found in Alkaliphilus metalliredigens (strain QYMF).